A 28-amino-acid chain; its full sequence is Short cationic peptide-1b (28 aa).

Glutamic acid 1-amide is present on Glu28.

As to expression, expressed by the venom gland.

The protein localises to the secreted. The polypeptide is Short cationic peptide-1b (Cupiennius salei (American wandering spider)).